A 187-amino-acid chain; its full sequence is MELQIGRVIKPHGVRGEVVVDPTTDTPELRFATGEVLKGKQAGKELSLTVRSFRPHQGRLLVTFEEIADRTAAESLRGVRFFAAPVHDEDDDGFYDHELEGLTAYLLAPGTDLKGDEIQLGDLVGEVVAVEHTPAGQLLVILIDAESQLPTAGKEVLVPFRHQIVPVVDLEEEILVLTPPEGLLELS.

In terms of domain architecture, PRC barrel spans 91–183 (DDGFYDHELE…ILVLTPPEGL (93 aa)).

It belongs to the RimM family. Binds ribosomal protein uS19.

The protein resides in the cytoplasm. An accessory protein needed during the final step in the assembly of 30S ribosomal subunit, possibly for assembly of the head region. Essential for efficient processing of 16S rRNA. May be needed both before and after RbfA during the maturation of 16S rRNA. It has affinity for free ribosomal 30S subunits but not for 70S ribosomes. The polypeptide is Ribosome maturation factor RimM (Corynebacterium jeikeium (strain K411)).